The chain runs to 217 residues: MSGGLAPSKSTVYVSNLPFSLTNNDLYRIFSKYGKVVKVTIMKDKDTRKSKGVAFILFLDKDSAQNCTRAINNKQLFGRVIKASIAIDNGRAAEFIRRRNYFDKSKCYECGESGHLSYACPKNMLGEREPPKKKEKKKKKKAPEPEEEIEEVEESEDEGEDPALDSLSQAIAFQQAKIEEEQKKWKPSSGVPSTSDDSRRPRIKKSTYFSDEEELSD.

An RRM domain is found at 10–88; the sequence is STVYVSNLPF…RVIKASIAID (79 aa). The CCHC-type zinc finger occupies 105-122; the sequence is SKCYECGESGHLSYACPK. Residues 120-217 are disordered; the sequence is CPKNMLGERE…YFSDEEELSD (98 aa). Over residues 145-163 the composition is skewed to acidic residues; it reads PEEEIEEVEESEDEGEDPA. A phosphoserine mark is found at S155, S210, and S216.

In terms of assembly, component of the U11/U12 snRNPs that are part of the U12-type spliceosome.

The protein resides in the nucleus. It localises to the nucleoplasm. In Homo sapiens (Human), this protein is Zinc finger CCHC-type and RNA-binding motif-containing protein 1 (ZCRB1).